A 759-amino-acid chain; its full sequence is MSEPLIVGIRHHSPACARLVKSLIESQRPRYVLIEGPADFNDRVDELFLAHQLPVAIYSYCQYQDGAAPGRGAWTPFAEFSPEWQALQAARRIQAQTYFIDLPCWAQSEEEDDSPDTQDESQALLLRATRMDNSDTLWDHLFEDESQQTALPSALAHYFAQLRGDASGDALNRQREAFMARWIGWAMQQNNGDVLVVCGGWHAPALAKMWRECPQKINKPELPSLADAVTGCYLTPYSEKRLDVLAGYLSGMPAPVWQNWCWQWGLQKAGEQLLKTILTRLRQHKLPASTADMAAAHLHAMALAQLRGHTLPLRTDWLDAIAGSLIKEALNAPLPWSYRGVIHPDTDPILLTLIDTLAGDGFGKLAPSTPQPPLPKDVTCELERTAISLPAELTLNRFTPDGLAQSQVLHRLAILEIPGIVRQQGSTLTLAGNGEERWKLTRPLSQHAALIEAACFGATLQEAARNKLEADMLDAGGIGSITTCLSQAALAGLASFSQQLLEQLTLLIAQENQFAEMGQALEVLYALWRLDEISGMQGAQILQTTLCATIDRTLWLCESNGRPDEKEFHAHLHSWQALCHILRDLHSGVNLPGVSLSAAVALLERRSQAIHAPALDRGAALGALMRLEHPNASAEAALTMLAQLSPAQSGEALHGLLALARHQLACQPAFIAGFSSHLNQLSEADFINALPDLRAAMAWLPPRERGTLAHQVLEHYQLAQLPVSALQMPLHCPPQAIAHHQQLEQQALASLQNWGVFHV.

This is an uncharacterized protein from Escherichia coli (strain K12).